A 420-amino-acid chain; its full sequence is Hemojuvelin (420 aa).

A signal peptide spans 1–32 (MGQSPSPRSPHGSPPTLSTLTLLLLLCGQAHS). Phosphotyrosine is present on Y43. N-linked (GlcNAc...) asparagine glycosylation occurs at N111. Residues 113 to 135 (SRQGPTAPPPARGPALPGAGPAP) form a disordered region. Residues 125–134 (GPALPGAGPA) show a composition bias toward low complexity. 2 disulfide bridges follow: C141–C223 and C160–C310. N206 and N365 each carry an N-linked (GlcNAc...) asparagine glycan. D393 carries GPI-anchor amidated aspartate lipidation. Residues 394 to 420 (AGPPLSPAICLVPLLSALFVLWLCFSK) constitute a propeptide, removed in mature form.

The protein belongs to the repulsive guidance molecule (RGM) family. In terms of assembly, interacts with BMP2 and BMP4. Interacts with BMP6. Interacts with BMPR1B. Interacts with TMPRSS6. Autocatalytically cleaved at low pH; the two chains remain linked via two disulfide bonds. Also proteolytically processed by TMPRSS6, several fragments being released in the extracellular space; regulates HJV activity in BMP signaling and thefore iron homeostasis. As to expression, muscle cell lineage.

It localises to the cell membrane. Acts as a bone morphogenetic protein (BMP) coreceptor. Through enhancement of BMP signaling regulates hepcidin (HAMP) expression and regulates iron homeostasis. This Mus musculus (Mouse) protein is Hemojuvelin.